A 464-amino-acid polypeptide reads, in one-letter code: GDNF family receptor alpha-2 (464 aa).

The signal sequence occupies residues 1–21; it reads MILANVFCLFFFLDETLRSLA. Cystine bridges form between C40-C93, C47-C53, C63-C78, C95-C105, C161-C222, C168-C174, C185-C200, C195-C241, C224-C229, C251-C323, C258-C264, C275-C293, C285-C347, and C325-C335. N52 carries an N-linked (GlcNAc...) asparagine glycan. N-linked (GlcNAc...) asparagine glycosylation is found at N357 and N413. S444 carries the GPI-anchor amidated serine lipid modification. A propeptide spans 445-464 (removed in mature form); that stretch reads RARPSAALTVLSVLMLKLAL.

It belongs to the GDNFR family. As to quaternary structure, interacts with NRTN ligand and RET: forms a 2:2:2 ternary complex composed of NRTN ligand, GFRA2 and RET receptor. Also forms a 4:4:4 tetrameric complex composed of 4 copies of NRTN ligand, GFRA2 and RET receptor, which prevents endocytosis of RET. Interacts with SORL1.

The protein resides in the cell membrane. Receptor for neurturin (NRTN), a growth factor that supports the survival of sympathetic neurons. NRTN-binding leads to autophosphorylation and activation of the RET receptor. Also able to mediate GDNF signaling through the RET tyrosine kinase receptor. The sequence is that of GDNF family receptor alpha-2 (GFRA2) from Pongo abelii (Sumatran orangutan).